We begin with the raw amino-acid sequence, 403 residues long: Phosphoglycerate kinase (403 aa).

Residues 21 to 23 (DFN), arginine 36, 59 to 62 (HLGR), arginine 119, and arginine 159 contribute to the substrate site. Residues lysine 214, glycine 301, glutamate 332, and 359-362 (GGDS) each bind ATP.

Belongs to the phosphoglycerate kinase family. As to quaternary structure, monomer.

The protein resides in the cytoplasm. The catalysed reaction is (2R)-3-phosphoglycerate + ATP = (2R)-3-phospho-glyceroyl phosphate + ADP. It functions in the pathway carbohydrate degradation; glycolysis; pyruvate from D-glyceraldehyde 3-phosphate: step 2/5. The polypeptide is Phosphoglycerate kinase (Lactobacillus gasseri (strain ATCC 33323 / DSM 20243 / BCRC 14619 / CIP 102991 / JCM 1131 / KCTC 3163 / NCIMB 11718 / NCTC 13722 / AM63)).